Consider the following 1219-residue polypeptide: N-acetylglucosamine-1-phosphotransferase subunits alpha/beta (1219 aa).

A helical membrane pass occupies residues 27–47; it reads LCFGGLVLMIVSAFQFGEVVV. Residues Asn-88, Asn-119, Asn-153, Asn-292, and Asn-381 are each glycosylated (N-linked (GlcNAc...) asparagine). Cystine bridges form between Cys-443/Cys-466, Cys-457/Cys-473, Cys-508/Cys-531, and Cys-522/Cys-538. 2 LNR repeats span residues 443-478 and 508-538; these read CAEG…GSSR and CNQG…VGDC. Asp-454 contributes to the Ca(2+) binding site. Asn-462 carries an N-linked (GlcNAc...) asparagine glycan. Ca(2+) contacts are provided by Asp-469, Asp-472, Asp-519, Asp-534, and Asp-537. N-linked (GlcNAc...) asparagine glycosylation is found at Asn-554, Asn-610, Asn-617, Asn-645, Asn-696, Asn-726, Asn-823, and Asn-974. Residues 640-666 form a disordered region; that stretch reads ELPKSNTSTPVRDKEEEPKPTVATPEP. Residues 696-804 form the DMAP1-binding domain; sequence NETLLPDEVK…DDVTTKAQSR (109 aa). In terms of domain architecture, EF-hand spans 970-1005; sequence VQQLNISEVFDEIDTDHSGVLSDREIRTLATRIHEL. 4 residues coordinate Ca(2+): Asp-983, Asp-985, Ser-987, and Glu-994. N-linked (GlcNAc...) asparagine glycans are attached at residues Asn-1021, Asn-1029, and Asn-1094. Residues 1180–1200 traverse the membrane as a helical segment; it reads VLVTLVVFTVMSFFAEQLVML.

This sequence belongs to the stealth family. In terms of assembly, hexamer of two alpha, two beta and two gamma (GNPTG) subunits; disulfide-linked. The alpha and/or the beta subunits of the enzyme constitute the catalytic subunits. The alpha- and beta-subunits are generated by a proteolytic cleavage by mbtps1 protease at the Gln-893-Asp-894 bond.

It localises to the golgi apparatus membrane. The catalysed reaction is N(4)-[alpha-D-mannosyl-(1-&gt;2)-alpha-D-mannosyl-(glycan)]-L-asparaginyl-[protein] + UDP-N-acetyl-alpha-D-glucosamine = N(4)-[6-(N-acetyl-alpha-D-glucosaminyl-1-phospho)-alpha-D-mannosyl-(1-&gt;2)-alpha-D-mannosyl-(glycan)]-L-asparaginyl-[protein] + UMP + H(+). Its function is as follows. Catalyzes the formation of mannose 6-phosphate (M6P) markers on high mannose type oligosaccharides in the Golgi apparatus. M6P residues are required to bind to the M6P receptors (MPR), which mediate the vesicular transport of lysosomal enzymes to the endosomal/prelysosomal compartment. The sequence is that of N-acetylglucosamine-1-phosphotransferase subunits alpha/beta (gnptab) from Danio rerio (Zebrafish).